Consider the following 284-residue polypeptide: Orotidine 5'-phosphate decarboxylase (284 aa).

Substrate is bound by residues Asp42, 64 to 66 (KTH), 96 to 105 (DRKFADIGNT), Tyr237, and Arg255. The Proton donor role is filled by Lys98.

The protein belongs to the OMP decarboxylase family.

It catalyses the reaction orotidine 5'-phosphate + H(+) = UMP + CO2. Its pathway is pyrimidine metabolism; UMP biosynthesis via de novo pathway; UMP from orotate: step 2/2. This Magnusiomyces magnusii (Yeast) protein is Orotidine 5'-phosphate decarboxylase (URA3).